A 100-amino-acid polypeptide reads, in one-letter code: Large ribosomal subunit protein uL23 (100 aa).

Belongs to the universal ribosomal protein uL23 family. Part of the 50S ribosomal subunit. Contacts protein L29, and trigger factor when it is bound to the ribosome.

Functionally, one of the early assembly proteins it binds 23S rRNA. One of the proteins that surrounds the polypeptide exit tunnel on the outside of the ribosome. Forms the main docking site for trigger factor binding to the ribosome. This Mycobacterium sp. (strain JLS) protein is Large ribosomal subunit protein uL23.